The chain runs to 413 residues: Phosphopentomutase (413 aa).

Mn(2+) is bound by residues aspartate 11, aspartate 306, histidine 311, aspartate 347, histidine 348, and histidine 359.

The protein belongs to the phosphopentomutase family. Mn(2+) is required as a cofactor.

It localises to the cytoplasm. The enzyme catalyses 2-deoxy-alpha-D-ribose 1-phosphate = 2-deoxy-D-ribose 5-phosphate. The catalysed reaction is alpha-D-ribose 1-phosphate = D-ribose 5-phosphate. It participates in carbohydrate degradation; 2-deoxy-D-ribose 1-phosphate degradation; D-glyceraldehyde 3-phosphate and acetaldehyde from 2-deoxy-alpha-D-ribose 1-phosphate: step 1/2. In terms of biological role, isomerase that catalyzes the conversion of deoxy-ribose 1-phosphate (dRib-1-P) and ribose 1-phosphate (Rib-1-P) to deoxy-ribose 5-phosphate (dRib-5-P) and ribose 5-phosphate (Rib-5-P), respectively. This Helicobacter pylori (strain Shi470) protein is Phosphopentomutase.